Reading from the N-terminus, the 463-residue chain is Gamma-aminobutyric acid receptor subunit alpha-5 (463 aa).

An N-terminal signal peptide occupies residues 1 to 25; sequence MDNGMLSRFIMTQTLLVFCISMTLS. Residues 26–260 are Extracellular-facing; that stretch reads SHFGFSQMPT…FHLKRKIGYF (235 aa). Asparagine 45 is a glycosylation site (N-linked (GlcNAc...) asparagine). Arginine 101 provides a ligand contact to 4-aminobutanoate. N-linked (GlcNAc...) asparagine glycosylation is present at asparagine 145. Residue threonine 164 coordinates 4-aminobutanoate. Cysteine 173 and cysteine 187 are oxidised to a cystine. 2 N-linked (GlcNAc...) asparagine glycosylation sites follow: asparagine 207 and asparagine 236. Transmembrane regions (helical) follow at residues 261-281, 287-308, and 319-340; these read VIQT…SFWL, PART…ISAR, and AMDW…EFAT. Residues 341 to 428 lie on the Cytoplasmic side of the membrane; sequence VNYFTKRGWA…TYNSISKIDK (88 aa). Lysine 355 participates in a covalent cross-link: Glycyl lysine isopeptide (Lys-Gly) (interchain with G-Cter in ubiquitin). The disordered stretch occupies residues 387-408; that stretch reads PNIPKEQPPAGTANAPTVSIKA. Residues 429 to 449 traverse the membrane as a helical segment; the sequence is MSRIVFPILFGTFNLVYWATY.

This sequence belongs to the ligand-gated ion channel (TC 1.A.9) family. Gamma-aminobutyric acid receptor (TC 1.A.9.5) subfamily. GABRA5 sub-subfamily. Heteropentamer, formed by a combination of alpha (GABRA1-6), beta (GABRB1-3), gamma (GABRG1-3), delta (GABRD), epsilon (GABRE), rho (GABRR1-3), pi (GABRP) and theta (GABRQ) chains, each subunit exhibiting distinct physiological and pharmacological properties. Expressed in brain, in hippocampal pyramidal neurons.

The protein resides in the postsynaptic cell membrane. The protein localises to the cell membrane. The enzyme catalyses chloride(in) = chloride(out). Functionally, alpha subunit of the heteropentameric ligand-gated chloride channel gated by gamma-aminobutyric acid (GABA), a major inhibitory neurotransmitter in the brain. GABA-gated chloride channels, also named GABA(A) receptors (GABAAR), consist of five subunits arranged around a central pore and contain GABA active binding site(s) located at the alpha and beta subunit interface(s). When activated by GABA, GABAARs selectively allow the flow of chloride anions across the cell membrane down their electrochemical gradient. GABAARs containing alpha-5/GABRA5 are mainly extrasynaptic and contribute to the tonic GABAergic inhibition of the hippocampus. Extrasynaptic alpha-5-containing GABAARs in CA1 pyramidal neurons play a role in learning and memory processes. The protein is Gamma-aminobutyric acid receptor subunit alpha-5 of Mus musculus (Mouse).